We begin with the raw amino-acid sequence, 535 residues long: CTP synthase (535 aa).

Positions 1 to 267 are amidoligase domain; that stretch reads MTKYIFVTGG…DSLVCSHLKL (267 aa). CTP is bound at residue S13. UTP is bound at residue S13. Residue 14-19 coordinates ATP; the sequence is SLGKGI. Y54 lines the L-glutamine pocket. Position 71 (D71) interacts with ATP. 2 residues coordinate Mg(2+): D71 and E141. Residues 148 to 150, 188 to 193, and K224 contribute to the CTP site; these read DIE and KTKPTQ. UTP contacts are provided by residues 188 to 193 and K224; that span reads KTKPTQ. The region spanning 292-534 is the Glutamine amidotransferase type-1 domain; it reads TIALVGKYVE…VHASLKTSEK (243 aa). L-glutamine is bound at residue G354. Catalysis depends on C381, which acts as the Nucleophile; for glutamine hydrolysis. L-glutamine is bound by residues 382–385, E405, and R462; that span reads LGMQ. Active-site residues include H507 and E509.

The protein belongs to the CTP synthase family. In terms of assembly, homotetramer.

It carries out the reaction UTP + L-glutamine + ATP + H2O = CTP + L-glutamate + ADP + phosphate + 2 H(+). The catalysed reaction is L-glutamine + H2O = L-glutamate + NH4(+). The enzyme catalyses UTP + NH4(+) + ATP = CTP + ADP + phosphate + 2 H(+). The protein operates within pyrimidine metabolism; CTP biosynthesis via de novo pathway; CTP from UDP: step 2/2. Allosterically activated by GTP, when glutamine is the substrate; GTP has no effect on the reaction when ammonia is the substrate. The allosteric effector GTP functions by stabilizing the protein conformation that binds the tetrahedral intermediate(s) formed during glutamine hydrolysis. Inhibited by the product CTP, via allosteric rather than competitive inhibition. In terms of biological role, catalyzes the ATP-dependent amination of UTP to CTP with either L-glutamine or ammonia as the source of nitrogen. Regulates intracellular CTP levels through interactions with the four ribonucleotide triphosphates. This Bacillus licheniformis (strain ATCC 14580 / DSM 13 / JCM 2505 / CCUG 7422 / NBRC 12200 / NCIMB 9375 / NCTC 10341 / NRRL NRS-1264 / Gibson 46) protein is CTP synthase.